Consider the following 477-residue polypeptide: Inner membrane transporter YgjI (477 aa).

Topologically, residues 1 to 8 (MSDTKRNT) are periplasmic. Residues 9–29 (IGKFGLLSLTFAAVYSFNNVI) traverse the membrane as a helical segment. Residues 30-41 (NNNIELGLASAP) are Cytoplasmic-facing. Residues 42-62 (MFFLATIFYFIPFCLIIAEFV) traverse the membrane as a helical segment. At 63 to 83 (SLNKNSEAGVYAWVKSSLGGR) the chain is on the periplasmic side. Residues 84 to 104 (WAFITAYTYWFVNLFFFTSLL) traverse the membrane as a helical segment. At 105 to 120 (PRVIAYASYAFLGYEY) the chain is on the cytoplasmic side. A helical transmembrane segment spans residues 121–141 (IMTPVATTIISMVLFAFSTWV). Topologically, residues 142–158 (STNGAKMLGPITSVTST) are periplasmic. A helical transmembrane segment spans residues 159–179 (LMLLLTLSYILLAGTALVGGV). Residues 180 to 196 (QPADAITVDAMIPNFNW) lie on the Cytoplasmic side of the membrane. The chain crosses the membrane as a helical span at residues 197 to 217 (AFLGVTTWIFMAAGGAESVAV). The Periplasmic portion of the chain corresponds to 218-232 (YVNDVKGGSKSFVKV). Residues 233-253 (IILAGIFIGVLYSVSSVLINV) traverse the membrane as a helical segment. Residues 254–263 (FVSSKELKFT) lie on the Cytoplasmic side of the membrane. Residues 264 to 284 (GGSVQVFHGMAAYFGLPEALM) traverse the membrane as a helical segment. The Periplasmic portion of the chain corresponds to 285–286 (NR). A helical membrane pass occupies residues 287–307 (FVGLVSFTAMFGSLLMWTATP). Over 308-335 (VKIFFSEIPEGIFGKKTVELNENGVPAR) the chain is Cytoplasmic. A helical transmembrane segment spans residues 336-356 (AAWIQFLIVIPLMIIPMLGSN). Over 357-364 (TVQDLMNT) the chain is Periplasmic. A helical membrane pass occupies residues 365-385 (IINMTAAASMLPPLFIMLAYL). The Cytoplasmic segment spans residues 386 to 405 (NLRAKLDHLPRDFRMGSRRT). The chain crosses the membrane as a helical span at residues 406–426 (GIIVVSMLIAIFAVGFVASTF). The Periplasmic segment spans residues 427-431 (PTGAN). Residues 432–452 (ILTIIFYNVGGIVIFLGFAWW) form a helical membrane-spanning segment. Over 453 to 477 (KYSKYIKGLTAEERHIEATPASNVD) the chain is Cytoplasmic.

This sequence belongs to the amino acid-polyamine-organocation (APC) superfamily.

It localises to the cell inner membrane. The protein is Inner membrane transporter YgjI (ygjI) of Escherichia coli (strain K12).